The primary structure comprises 303 residues: Hydroxyacylglutathione hydrolase, mitochondrial (303 aa).

Positions 97, 99, 101, 102, 153, and 177 each coordinate Zn(2+). Residues 186–188, 216–218, and 292–295 each bind substrate; these read KFF, HEY, and RKEK. His216 is a Zn(2+) binding site.

This sequence belongs to the metallo-beta-lactamase superfamily. Glyoxalase II family. Monomer. The cofactor is Zn(2+).

Its subcellular location is the mitochondrion matrix. It is found in the cytoplasm. It catalyses the reaction an S-(2-hydroxyacyl)glutathione + H2O = a 2-hydroxy carboxylate + glutathione + H(+). The catalysed reaction is (R)-S-lactoylglutathione + H2O = (R)-lactate + glutathione + H(+). Thiolesterase that catalyzes the hydrolysis of S-D-lactoyl-glutathione to form glutathione and D-lactic acid. The protein is Hydroxyacylglutathione hydrolase, mitochondrial (hagh) of Danio rerio (Zebrafish).